The following is a 182-amino-acid chain: Adenine phosphoribosyltransferase (182 aa).

The protein belongs to the purine/pyrimidine phosphoribosyltransferase family. As to quaternary structure, homodimer.

The protein resides in the cytoplasm. The catalysed reaction is AMP + diphosphate = 5-phospho-alpha-D-ribose 1-diphosphate + adenine. It functions in the pathway purine metabolism; AMP biosynthesis via salvage pathway; AMP from adenine: step 1/1. Its function is as follows. Catalyzes a salvage reaction resulting in the formation of AMP, that is energically less costly than de novo synthesis. The sequence is that of Adenine phosphoribosyltransferase from Koribacter versatilis (strain Ellin345).